We begin with the raw amino-acid sequence, 515 residues long: Probable malate:quinone oxidoreductase (515 aa).

Belongs to the MQO family. The cofactor is FAD.

It catalyses the reaction (S)-malate + a quinone = a quinol + oxaloacetate. The protein operates within carbohydrate metabolism; tricarboxylic acid cycle; oxaloacetate from (S)-malate (quinone route): step 1/1. The sequence is that of Probable malate:quinone oxidoreductase from Blochmanniella pennsylvanica (strain BPEN).